A 337-amino-acid chain; its full sequence is Glycerol-3-phosphate dehydrogenase [NAD(P)+] (337 aa).

NADPH is bound by residues Ser-12, Trp-13, and Lys-110. Sn-glycerol 3-phosphate-binding residues include Lys-110, Gly-141, and Ser-143. NADPH is bound at residue Ala-145. Residues Lys-196, Asp-249, Ser-259, Arg-260, and Asn-261 each coordinate sn-glycerol 3-phosphate. The active-site Proton acceptor is Lys-196. NADPH is bound at residue Arg-260. Residues Val-284 and Glu-286 each coordinate NADPH.

The protein belongs to the NAD-dependent glycerol-3-phosphate dehydrogenase family.

It localises to the cytoplasm. The catalysed reaction is sn-glycerol 3-phosphate + NAD(+) = dihydroxyacetone phosphate + NADH + H(+). The enzyme catalyses sn-glycerol 3-phosphate + NADP(+) = dihydroxyacetone phosphate + NADPH + H(+). It functions in the pathway membrane lipid metabolism; glycerophospholipid metabolism. Catalyzes the reduction of the glycolytic intermediate dihydroxyacetone phosphate (DHAP) to sn-glycerol 3-phosphate (G3P), the key precursor for phospholipid synthesis. The protein is Glycerol-3-phosphate dehydrogenase [NAD(P)+] of Levilactobacillus brevis (strain ATCC 367 / BCRC 12310 / CIP 105137 / JCM 1170 / LMG 11437 / NCIMB 947 / NCTC 947) (Lactobacillus brevis).